A 2214-amino-acid polypeptide reads, in one-letter code: Non-reducing polyketide synthase dpmpA (2214 aa).

The segment at 75–178 is N-terminal acylcarrier protein transacylase domain (SAT); sequence EWIRTGDSHV…LAVCAGAWKD (104 aa). Residues 372–784 form the Ketosynthase family 3 (KS3) domain; that stretch reads DESIAIVGAS…GNNTAMIVCQ (413 aa). Catalysis depends on for beta-ketoacyl synthase activity residues Cys-532, His-667, and His-707. Residues 888–1184 are malonyl-CoA:ACP transacylase (MAT) domain; sequence VFAGQTGHRP…AFLSARLGSP (297 aa). Ser-974 acts as the For acyl/malonyl transferase activity in catalysis. Residues 1255–1389 are N-terminal hotdog fold; it reads PQLVSVVRSS…GIIKSQEQDR (135 aa). Residues 1255-1566 enclose the PKS/mFAS DH domain; it reads PQLVSVVRSS…FSKVPVRSLQ (312 aa). Positions 1265–1560 are product template (PT) domain; it reads GGADPEAAEF…AILGARFSKV (296 aa). Residues 1416–1566 are C-terminal hotdog fold; the sequence is GASVVQGAFV…FSKVPVRSLQ (151 aa). 2 consecutive Carrier domains span residues 1620-1695 and 1722-1802; these read NEVK…HSRL and KAST…SGAD. O-(pantetheine 4'-phosphoryl)serine is present on Ser-1654. The interval 1698–1728 is disordered; that stretch reads VPQLSPHDTDRSSDLSAGQPPSTPKASTQEQ. Positions 1711 to 1726 are enriched in polar residues; it reads DLSAGQPPSTPKASTQ. O-(pantetheine 4'-phosphoryl)serine is present on Ser-1762. Residues 1805–1827 form a disordered region; the sequence is GFPRTSDNRRSEEGSVGHVGPEK. Over residues 1810–1827 the composition is skewed to basic and acidic residues; it reads SDNRRSEEGSVGHVGPEK. A methyltransferase (CMeT) domain region spans residues 1958-2210; sequence FPAYRPDHRL…SREADLFRWI (253 aa).

It participates in secondary metabolite biosynthesis; terpenoid biosynthesis. In terms of biological role, non-reducing polyketide synthase; part of the gene cluster that mediates the biosynthesis of diterpenoid pyrones. The first step of the pathway is the synthesis of the alpha-pyrone moiety by the polyketide synthase dpmpA via condensation of one acetyl-CoA starter unit with 3 malonyl-CoA units and 2 methylations. The alpha-pyrone is then combined with geranylgeranyl pyrophosphate (GGPP) formed by the GGPP synthase dpmpD through the action of the prenyltransferase dpmpC to yield a linear alpha-pyrone diterpenoid. Subsequent steps in the diterpenoid pyrone biosynthetic pathway involve the decalin core formation, which is initiated by the epoxidation of the C10-C11 olefin by the FAD-dependent oxidoreductase dpmpE, and is followed by a cyclization cascade catalyzed by the terpene cyclase dpmpB. The short chain dehydrogenase/reductase dpmpG then oxidizes the 8S hydroxy group to a ketone and the short chain dehydrogenase/reductase dpmpH reduces the ketone to the 8R hydroxy group to yield higginsianin B. Higginsianin B is further methylated by the methyltransferase dpmpI to produce the intermediate named FDDP B. The cytochrome P450 monooxygenase dpmpJ then oxidizes the C-26 methyl to primary alcohol, producing the final diterpenoid pyrone with a C-26 primary alcohol on the gamma-pyrone moiety named FDDP C. The sequence is that of Non-reducing polyketide synthase dpmpA from Macrophomina phaseolina (strain MS6) (Charcoal rot fungus).